A 326-amino-acid chain; its full sequence is Transposase InsH for insertion sequence element IS5H (326 aa).

Belongs to the transposase 11 family.

Involved in the transposition of the insertion sequence IS5. This Escherichia coli (strain K12) protein is Transposase InsH for insertion sequence element IS5H (insH6).